Reading from the N-terminus, the 137-residue chain is Thionin-like protein 1 (137 aa).

The signal sequence occupies residues methionine 1 to alanine 23.

It belongs to the plant thionin (TC 1.C.44) family. Post-translationally, is disulfide-linked.

It localises to the secreted. May be involved in plant defense. This chain is Thionin-like protein 1, found in Arabidopsis thaliana (Mouse-ear cress).